A 144-amino-acid chain; its full sequence is 3-hydroxyacyl-[acyl-carrier-protein] dehydratase FabZ (144 aa).

H48 is an active-site residue.

This sequence belongs to the thioester dehydratase family. FabZ subfamily.

The protein localises to the cytoplasm. The catalysed reaction is a (3R)-hydroxyacyl-[ACP] = a (2E)-enoyl-[ACP] + H2O. Functionally, involved in unsaturated fatty acids biosynthesis. Catalyzes the dehydration of short chain beta-hydroxyacyl-ACPs and long chain saturated and unsaturated beta-hydroxyacyl-ACPs. This Bacillus pumilus (strain SAFR-032) protein is 3-hydroxyacyl-[acyl-carrier-protein] dehydratase FabZ.